The following is a 239-amino-acid chain: Adenylate kinase 2 (239 aa).

29–34 is an ATP binding site; it reads GSGKGT. Residues 49–78 form an NMP region; it reads STGDILRAIIASGSELGQKVQKITESGGLV. AMP is bound by residues Thr-50, Arg-55, 76 to 78, 104 to 107, and Gln-111; these read GLV and GFPR. Residues 145–182 form an LID region; it reads GRLFHLASGRSYHELFNPPKVPMVDDITGDRLVHRSDD. ATP contacts are provided by residues Arg-146 and 155–156; that span reads SY. Residues Arg-179 and Arg-190 each contribute to the AMP site.

It belongs to the adenylate kinase family. AK2 subfamily. In terms of assembly, monomer. Mg(2+) serves as cofactor.

The protein resides in the cytoplasm. It is found in the cytosol. The enzyme catalyses AMP + ATP = 2 ADP. It functions in the pathway purine metabolism; purine nucleotide biosynthesis. Functionally, catalyzes the reversible transfer of the terminal phosphate group between ATP and AMP. Plays an important role in cellular energy homeostasis and in adenine nucleotide metabolism. This chain is Adenylate kinase 2, found in Schistosoma mansoni (Blood fluke).